The chain runs to 396 residues: Putative 3-phosphoinositide-dependent protein kinase 2 (396 aa).

The segment covering 1–11 (MVRTQTESSTP) has biased composition (polar residues). Positions 1–53 (MVRTQTESSTPPGIPGGSRQGPAMDGTAAEPRPGAGSLQHAQPPPQPRKKRPE) are disordered. A Protein kinase domain is found at 55 to 315 (FKFGKILGEG…YGPLKAHPFF (261 aa)). Residues 65–67 (SFS) and K84 each bind ATP. Residues 86 to 130 (LEKRHIIKENKVPYVTRERDVMSRLDHPFFVKLYFTFQDDEKLYF) are PIF-pocket. Residues 133-135 (SYA) and E139 contribute to the ATP site. The Proton acceptor role is filled by D178. Residues E182 and D196 each contribute to the ATP site.

It belongs to the protein kinase superfamily. AGC Ser/Thr protein kinase family. PDPK1 subfamily. Phosphorylated on tyrosine and serine/threonine.

The protein localises to the cytoplasm. Its subcellular location is the membrane. It carries out the reaction L-seryl-[protein] + ATP = O-phospho-L-seryl-[protein] + ADP + H(+). The enzyme catalyses L-threonyl-[protein] + ATP = O-phospho-L-threonyl-[protein] + ADP + H(+). In terms of biological role, phosphorylates and activates not only PKB/AKT, but also PKA, PKC-zeta, RPS6KA1 and RPS6KB1. May play a general role in signaling processes and in development. The sequence is that of Putative 3-phosphoinositide-dependent protein kinase 2 from Homo sapiens (Human).